The following is a 453-amino-acid chain: Ribosome biogenesis protein SSF1 (453 aa).

Over residues 1-11 the composition is skewed to basic residues; sequence MAKRRQKKRTH. Disordered regions lie at residues 1–22, 275–324, and 374–453; these read MAKR…EQGI, KAKH…PRKK, and KMRL…SEVE. The 323-residue stretch at 26-348 folds into the Brix domain; it reads MVIRVGQTSL…LVKIEEGICS (323 aa). Basic and acidic residues predominate over residues 288–300; the sequence is PVEKKDNKEREKE. Phosphothreonine is present on T301. Residues 374–398 are compositionally biased toward basic and acidic residues; that stretch reads KMRLKEQRKKEQEENIAKKKAVKDA. Over residues 399–409 the composition is skewed to basic residues; that stretch reads KKQRKLERRKA. A compositionally biased stretch (basic and acidic residues) spans 410–423; it reads RAAEGGEGQGKDDA. A compositionally biased stretch (acidic residues) spans 442–453; sequence EDLDSDLFSEVE.

In terms of assembly, part of a complex that includes BRX1, RPF1, RPF2 and SSF1 or SSF2.

The protein resides in the nucleus. It localises to the nucleolus. Its function is as follows. Required for biogenesis of the 60S ribosomal subunit. This chain is Ribosome biogenesis protein SSF1 (SSF1), found in Saccharomyces cerevisiae (strain ATCC 204508 / S288c) (Baker's yeast).